The sequence spans 277 residues: RNA-binding protein pno-1 (277 aa).

2 disordered regions span residues 1 to 52 (MATS…KLVK) and 72 to 100 (DEDA…GESR). The span at 8–27 (FDDELPMEEGMPELLDDEDV) shows a compositional bias: acidic residues. The segment covering 30-40 (TLPSLLEQNLD) has biased composition (polar residues). The segment covering 72–81 (DEDATADTAD) has biased composition (acidic residues). Positions 198 to 250 (GDHVSRAIGRIAGKDGRTKLVIENTTKTRIVVANTKIHILGAYQNLKLARNAV) constitute a KH domain.

This sequence belongs to the PNO1 family. As to quaternary structure, part of the small subunit (SSU) processome, composed of more than 70 proteins and the RNA chaperone small nucleolar RNA (snoRNA) U3.

It localises to the nucleus. The protein localises to the nucleolus. Its function is as follows. Part of the small subunit (SSU) processome, first precursor of the small eukaryotic ribosomal subunit. During the assembly of the SSU processome in the nucleolus, many ribosome biogenesis factors, an RNA chaperone and ribosomal proteins associate with the nascent pre-rRNA and work in concert to generate RNA folding, modifications, rearrangements and cleavage as well as targeted degradation of pre-ribosomal RNA by the RNA exosome. Positively regulates dimethylation of two adjacent adenosines in the loop of a conserved hairpin near the 3'-end of 18S rRNA. The sequence is that of RNA-binding protein pno-1 from Caenorhabditis elegans.